A 671-amino-acid polypeptide reads, in one-letter code: Receptor-interacting serine/threonine-protein kinase 1 (671 aa).

Residue Ser6 is modified to Phosphoserine; by IKKA and IKKB. One can recognise a Protein kinase domain in the interval 17–289 (FLESAELDSG…GIEEKFRPFY (273 aa)). A Phosphoserine; by autocatalysis modification is found at Ser20. Residues 23-31 (LDSGGFGKV) and Lys45 contribute to the ATP site. Ser25 is modified (phosphoserine; by IKKA and IKKB). Asp138 (proton acceptor) is an active-site residue. Position 161 is a phosphoserine; by RIPK3 and autocatalysis (Ser161). Phosphoserine; by autocatalysis is present on Ser166. Residues 290 to 582 (LSQLEESVEE…QAIFDNTTSL (293 aa)) form an interaction with SQSTM1 region. Ser303 bears the Phosphoserine mark. Phosphoserine; by MAP3K7 is present on residues Ser320, Ser331, and Ser333. The segment covering 331-348 (SRSNSATEQPGSLHSSQG) has biased composition (polar residues). The disordered stretch occupies residues 331–354 (SRSNSATEQPGSLHSSQGLGMGPV). A Glycyl lysine isopeptide (Lys-Gly) (interchain with G-Cter in ubiquitin) cross-link involves residue Lys377. Position 384 is a phosphotyrosine (Tyr384). Residues 389–455 (SRMDRQTKQQ…GNAVHQPSGL (67 aa)) are disordered. Positions 428 to 444 (NFQNTEGKGTAYSSAAS) are enriched in polar residues. Residues 531 to 547 (YTIYNSTGIQIGAYNYM) carry the RIP homotypic interaction motif (RHIM) motif. Positions 583 to 669 (TDKHLDPIRE…DLLSSLIYVS (87 aa)) constitute a Death domain. The (Microbial infection) N-beta-linked (GlcNAc) arginine glycan is linked to Arg603.

It belongs to the protein kinase superfamily. TKL Ser/Thr protein kinase family. Homodimer. Interacts (via RIP homotypic interaction motif) with RIPK3 (via RIP homotypic interaction motif); this interaction induces RIPK1 phosphorylation and formation of a RIPK1-RIPK3 necroptosis-inducing complex. Upon TNF-induced necrosis, the RIPK1-RIPK3 dimer further interacts with PGAM5 and MLKL; the formation of this complex leads to PGAM5 phosphorylation and increase in PGAM5 phosphatase activity. Interacts (via the death domain) with TNFRSF6 (via the death domain) and TRADD (via the death domain). Is recruited by TRADD to TNFRSF1A in a TNF-dependent process. Binds RNF216, EGFR, IKBKG, TRAF1, TRAF2 and TRAF3. Interacts with BNLF1. Interacts with SQSTM1 upon TNF-alpha stimulation. May interact with MAVS/IPS1. Interacts with ZFAND5. Interacts with RBCK1. Interacts with ZBP1. Interacts with BIRC2/c-IAP1, BIRC3/c-IAP2 and XIAP/BIRC4. Interacts (via kinase domain) with DAB2IP (via Ras-GAP domain); the interaction occurs in a TNF-alpha-dependent manner. Interacts with ARHGEF2. Interacts (via protein kinase domain) with RFFL; involved in RIPK1 ubiquitination. Interacts with RNF34; involved in RIPK1 ubiquitination. Interacts with TICAM1 and this interaction is enhanced in the presence of WDFY1. Interacts with PELI1. Interacts (via death domain) with CRADD (via death domain); the interaction is direct. Component of complex IIa composed of at least RIPK1, FADD and CASP8. Component of the AIM2 PANoptosome complex, a multiprotein complex that drives inflammatory cell death (PANoptosis). Interacts with MAP3K7, CFLAR, CASP8, FADD and NEMO. Interacts with TAX1BP1; this interaction negatively regulates RIPK1 ubiquitination. Interacts with GRB2. Interacts with DDX24; this interaction disrupts RLR signaling activation of IFN-dependent transcription factor IRF7. As to quaternary structure, (Microbial infection) Interacts with mumps virus protein SH; this interaction inhibits downstream NF-kappa-B pathway activation. In terms of assembly, (Microbial infection) Interacts with Murid herpesvirus 1 protein RIR1. (Microbial infection) Interacts (via RIP homotypic interaction motif) with herpes simplex virus 1/HHV-1 protein RIR1/ICP6 (via RIP homotypic interaction motif); this interaction prevents necroptosis activation. As to quaternary structure, (Microbial infection) Interacts (via RIP homotypic interaction motif) with herpes simplex virus 2/HHV-2 protein RIR1/ICP10 (via RIP homotypic interaction motif); this interaction prevents necroptosis activation. Post-translationally, (Microbial infection) Proteolytically cleaved by S.flexneri OspD3 within the RIP homotypic interaction motif (RHIM), leading to its degradation and inhibition of necroptosis. In terms of processing, proteolytically cleaved by CASP8 at Asp-324. Cleavage is crucial for limiting TNF-induced apoptosis, necroptosis and inflammatory response. Cleavage abolishes NF-kappa-B activation and enhances the interaction of TRADD with FADD. Proteolytically cleaved by CASP6 during intrinsic apoptosis. RIPK1 and RIPK3 undergo reciprocal auto- and trans-phosphorylation. Phosphorylation of Ser-161 by RIPK3 is necessary for the formation of the necroptosis-inducing complex. Phosphorylation at Ser-25 represses its kinase activity and consequently prevents TNF-mediated RIPK1-dependent cell death. Phosphorylated at Ser-320 by MAP3K7 which requires prior ubiquitination with 'Lys-63'-linked chains by BIRC2/c-IAP1 and BIRC3/c-IAP2. This phosphorylation positively regulates RIPK1 interaction with RIPK3 to promote necroptosis but negatively regulates RIPK1 kinase activity and its interaction with FADD to mediate apoptosis. Post-translationally, deubiquitinated by USP7; this modification is required for TNF-alpha-induced apoptosis. In terms of processing, ubiquitinated with 'Lys-11'-, 'Lys-48'-, 'Lys-63'- and linear-linked type ubiquitin. Polyubiquitination with 'Lys-63'-linked chains by TRAF2 induces association with the IKK complex. Deubiquitination of 'Lys-63'-linked chains and polyubiquitination with 'Lys-48'-linked chains by TNFAIP3 leads to RIPK1 proteasomal degradation and consequently down-regulates TNF-alpha-induced NF-kappa-B signaling. 'Lys-48'-linked polyubiquitination by RFFL or RNF34 also promotes proteasomal degradation and negatively regulates TNF-alpha-induced NF-kappa-B signaling. Linear polyubiquitinated; the head-to-tail linear polyubiquitination ('Met-1'-linked) is mediated by the LUBAC complex and decreases protein kinase activity. Deubiquitination of linear polyubiquitin by CYLD promotes the kinase activity. Polyubiquitinated with 'Lys-48' and 'Lys-63'-linked chains by BIRC2/c-IAP1 and BIRC3/c-IAP2, leading to activation of NF-kappa-B. Ubiquitinated with 'Lys-63'-linked chains by PELI1. Ubiquitination at Lys-377 with 'Lys-63'-linked chains by BIRC2/c-IAP1 and BIRC3/c-IAP2 is essential for its phosphorylation at Ser-320 mediated by MAP3K7. This ubiquitination is required for NF-kB activation, suppresses RIPK1 kinase activity and plays a critical role in preventing cell death during embryonic development. (Microbial infection) Glycosylated at Arg-603 by enteropathogenic E.coli protein NleB1: arginine GlcNAcylation prevents homotypic/heterotypic death domain interactions.

Its subcellular location is the cytoplasm. It localises to the cell membrane. It carries out the reaction L-seryl-[protein] + ATP = O-phospho-L-seryl-[protein] + ADP + H(+). The enzyme catalyses L-threonyl-[protein] + ATP = O-phospho-L-threonyl-[protein] + ADP + H(+). With respect to regulation, serine-threonine kinase activity is inhibited by linear polyubiquitination ('Met-1'-linked) by the LUBAC complex. Inhibited by necrostatins, including necrostatin-1, necrostatin-3 and necrostatin-4. Its function is as follows. Serine-threonine kinase which is a key regulator of TNF-mediated apoptosis, necroptosis and inflammatory pathways. Exhibits kinase activity-dependent functions that regulate cell death and kinase-independent scaffold functions regulating inflammatory signaling and cell survival. Has kinase-independent scaffold functions: upon binding of TNF to TNFR1, RIPK1 is recruited to the TNF-R1 signaling complex (TNF-RSC also known as complex I) where it acts as a scaffold protein promoting cell survival, in part, by activating the canonical NF-kappa-B pathway. Kinase activity is essential to regulate necroptosis and apoptosis, two parallel forms of cell death: upon activation of its protein kinase activity, regulates assembly of two death-inducing complexes, namely complex IIa (RIPK1-FADD-CASP8), which drives apoptosis, and the complex IIb (RIPK1-RIPK3-MLKL), which drives necroptosis. RIPK1 is required to limit CASP8-dependent TNFR1-induced apoptosis. In normal conditions, RIPK1 acts as an inhibitor of RIPK3-dependent necroptosis, a process mediated by RIPK3 component of complex IIb, which catalyzes phosphorylation of MLKL upon induction by ZBP1. Inhibits RIPK3-mediated necroptosis via FADD-mediated recruitment of CASP8, which cleaves RIPK1 and limits TNF-induced necroptosis. Required to inhibit apoptosis and necroptosis during embryonic development: acts by preventing the interaction of TRADD with FADD thereby limiting aberrant activation of CASP8. In addition to apoptosis and necroptosis, also involved in inflammatory response by promoting transcriptional production of pro-inflammatory cytokines, such as interleukin-6 (IL6). Phosphorylates RIPK3: RIPK1 and RIPK3 undergo reciprocal auto- and trans-phosphorylation. Phosphorylates DAB2IP at 'Ser-728' in a TNF-alpha-dependent manner, and thereby activates the MAP3K5-JNK apoptotic cascade. Required for ZBP1-induced NF-kappa-B activation in response to DNA damage. In Homo sapiens (Human), this protein is Receptor-interacting serine/threonine-protein kinase 1.